A 202-amino-acid chain; its full sequence is Nucleoside triphosphate pyrophosphatase (202 aa).

The Proton acceptor role is filled by aspartate 77.

The protein belongs to the Maf family. A divalent metal cation is required as a cofactor.

It is found in the cytoplasm. It carries out the reaction a ribonucleoside 5'-triphosphate + H2O = a ribonucleoside 5'-phosphate + diphosphate + H(+). It catalyses the reaction a 2'-deoxyribonucleoside 5'-triphosphate + H2O = a 2'-deoxyribonucleoside 5'-phosphate + diphosphate + H(+). Nucleoside triphosphate pyrophosphatase. May have a dual role in cell division arrest and in preventing the incorporation of modified nucleotides into cellular nucleic acids. The sequence is that of Nucleoside triphosphate pyrophosphatase from Rickettsia canadensis (strain McKiel).